The chain runs to 57 residues: Large ribosomal subunit protein uL30 (57 aa).

Belongs to the universal ribosomal protein uL30 family. In terms of assembly, part of the 50S ribosomal subunit.

The sequence is that of Large ribosomal subunit protein uL30 from Clostridium perfringens (strain ATCC 13124 / DSM 756 / JCM 1290 / NCIMB 6125 / NCTC 8237 / Type A).